The primary structure comprises 902 residues: AAA+ ATPase ClpV1 (902 aa).

Positions Phe-10–Asp-151 constitute a Clp R domain. 2 repeat regions span residues Leu-13–Leu-78 and Leu-88–Asp-151. Gly-237–Thr-244 contributes to the ATP binding site. Positions Ala-441–Glu-559 form a coiled coil. An ATP-binding site is contributed by Gly-640–Thr-647.

The protein belongs to the ClpA/ClpB family. Interacts with TagJ.

The protein localises to the cytoplasm. Functionally, component of the H1 type VI (H1-T6SS) secretion system that plays a role in the release of toxins targeting both eukaryotic and prokaryotic species. Acts as an AAA(+) ATPase that disassembles the contracted sheath, which resets the systems for reassembly of an extended sheath that is ready to fire again. This Pseudomonas aeruginosa (strain ATCC 15692 / DSM 22644 / CIP 104116 / JCM 14847 / LMG 12228 / 1C / PRS 101 / PAO1) protein is AAA+ ATPase ClpV1 (clpV1).